Here is an 815-residue protein sequence, read N- to C-terminus: Cell division control protein 48 homolog D (815 aa).

The residue at position 2 (Ala-2) is an N-acetylalanine. Ser-42 carries the post-translational modification Phosphoserine. ATP contacts are provided by residues 249–256 (GPPGSGKT) and 522–529 (GPPGCGKT). Residue Ser-720 is modified to Phosphoserine. Positions 772-815 (GSEFRFPDAPTGTTGAFPGAAATVGGVDPFATSGGAADDDDLYS) are disordered. The segment covering 780–798 (APTGTTGAFPGAAATVGGV) has biased composition (low complexity).

It belongs to the AAA ATPase family.

It localises to the nucleus. The protein resides in the cytoplasm. The protein localises to the cytoskeleton. It is found in the phragmoplast. Functionally, probably functions in cell division and growth processes. Interacts with certain SNAREs as part of specialized membrane fusion events where vesicles from the same organelle fuse (homotypic fusion). The chain is Cell division control protein 48 homolog D (CDC48D) from Arabidopsis thaliana (Mouse-ear cress).